A 266-amino-acid chain; its full sequence is Vesicle-associated protein 4-1 (266 aa).

The interval S28–S57 is disordered. Residues R76–I199 form the MSP domain. Positions D200–P228 form a coiled coil. A compositionally biased stretch (basic and acidic residues) spans E219–P229. The tract at residues E219–E239 is disordered. A Phosphoserine modification is found at S264.

This sequence belongs to the VAMP-associated protein (VAP) (TC 9.B.17) family.

Functionally, may play a role in vesicle trafficking. The polypeptide is Vesicle-associated protein 4-1 (PVA41) (Arabidopsis thaliana (Mouse-ear cress)).